The sequence spans 188 residues: Elongation factor P (188 aa).

Lys34 carries the N6-(3,6-diaminohexanoyl)-5-hydroxylysine modification.

This sequence belongs to the elongation factor P family. Is beta-lysylated on the epsilon-amino group of Lys-34 by the combined action of EpmA and EpmB, and then hydroxylated on the C5 position of the same residue by EpmC. Lysylation is critical for the stimulatory effect of EF-P on peptide-bond formation. The lysylation moiety would extend toward the peptidyltransferase center and stabilize the terminal 3-CCA end of the tRNA. The hydroxylation of the C5 position on Lys-34 would allow additional potential stabilizing hydrogen-bond interactions with the P-tRNA.

The protein localises to the cytoplasm. It participates in protein biosynthesis; polypeptide chain elongation. In terms of biological role, involved in peptide bond synthesis. Alleviates ribosome stalling that occurs when 3 or more consecutive Pro residues or the sequence PPG is present in a protein, possibly by augmenting the peptidyl transferase activity of the ribosome. Modification of Lys-34 is required for alleviation. This is Elongation factor P from Shigella boydii serotype 18 (strain CDC 3083-94 / BS512).